A 608-amino-acid chain; its full sequence is Zinc metalloproteinase-disintegrin-like agkihagin (608 aa).

Residues 1–20 form the signal peptide; it reads MIQVLLVTICLAAFPYQGSS. The propeptide occupies 21–189; it reads IILESGNVND…KKASQSNLTP (169 aa). The Peptidase M12B domain maps to 199–395; it reads KFVKLFLVAD…NMPQCILKKP (197 aa). Intrachain disulfides connect Cys-310/Cys-390, Cys-350/Cys-374, and Cys-352/Cys-357. His-335 is a binding site for Zn(2+). Glu-336 is an active-site residue. Zn(2+) contacts are provided by His-339 and His-345. In terms of domain architecture, Disintegrin spans 403–488; the sequence is PPVCGNYFVE…ADCTDRFQKN (86 aa). Ca(2+) is bound by residues Val-405, Asn-408, Phe-410, Glu-412, Glu-415, and Asp-418. 14 disulfide bridges follow: Cys-406–Cys-435, Cys-417–Cys-430, Cys-419–Cys-425, Cys-429–Cys-452, Cys-443–Cys-449, Cys-448–Cys-474, Cys-461–Cys-481, Cys-468–Cys-499, Cys-492–Cys-504, Cys-511–Cys-561, Cys-526–Cys-570, Cys-539–Cys-549, Cys-556–Cys-596, and Cys-590–Cys-601. The short motif at 467 to 469 is the D/ECD-tripeptide element; that stretch reads ECD. Asp-469, Met-470, Asp-472, Asp-483, and Arg-484 together coordinate Ca(2+). Asn-501 carries N-linked (GlcNAc...) asparagine glycosylation.

Belongs to the venom metalloproteinase (M12B) family. P-III subfamily. P-IIIc sub-subfamily. Homodimer; disulfide-linked. It depends on Zn(2+) as a cofactor. As to expression, expressed by the venom gland.

It localises to the secreted. With respect to regulation, inhibited by EDTA and EGTA. Not inhibited by PMSF, antipain, pepstatin, and iodoacetamide. In terms of biological role, strongly inhibits the collagen-induced human platelet aggregation. Hydrolyzes the Aalpha-chain of fibrinogen (FGA), without cleavage of Bbeta- and gamma-chains. Induces apoptosis and strongly inhibits proliferation of endothelial cells as well as adhesion of the cells to extracellular matrix proteins. The sequence is that of Zinc metalloproteinase-disintegrin-like agkihagin from Deinagkistrodon acutus (Hundred-pace snake).